Here is a 187-residue protein sequence, read N- to C-terminus: Adenylate kinase (187 aa).

10 to 15 is an ATP binding site; it reads GSGKGT. The NMP stretch occupies residues 30–59; sequence STGDLLRSEVVAGTPLGLQAKQVMAQGDLV. Residues Thr31, Arg36, 57–59, 85–88, and Gln92 each bind AMP; these read DLV and GYPR. The LID stretch occupies residues 126 to 136; sequence GRAQAEGREDD. Arg127 serves as a coordination point for ATP. Residues Arg133 and Arg144 each coordinate AMP. Gly172 provides a ligand contact to ATP.

The protein belongs to the adenylate kinase family. As to quaternary structure, monomer.

It localises to the cytoplasm. It carries out the reaction AMP + ATP = 2 ADP. It functions in the pathway purine metabolism; AMP biosynthesis via salvage pathway; AMP from ADP: step 1/1. Its function is as follows. Catalyzes the reversible transfer of the terminal phosphate group between ATP and AMP. Plays an important role in cellular energy homeostasis and in adenine nucleotide metabolism. This chain is Adenylate kinase, found in Xylella fastidiosa (strain 9a5c).